The chain runs to 1286 residues: Autotransporter adhesin AIDA-I (1286 aa).

Residues 1-49 (MNKAYSIIWSHSRQAWIVASELARGHGFVLAKNTLLVLAVVSTIGNAFA) form the signal peptide. O-alpha-linked (glycero-D-manno-heptose) serine glycans are attached at residues Ser102, Ser111, and Ser116. An O-alpha-linked (glycero-D-manno-heptose) threonine glycan is attached at Thr154. Ser242, Ser252, Ser334, Ser391, Ser409, Ser539, Ser545, Ser558, Ser569, Ser576, Ser577, and Ser582 each carry an O-alpha-linked (glycero-D-manno-heptose) serine glycan. Residues 998–1286 (TQPESASVWM…SGALGIKYSF (289 aa)) enclose the Autotransporter domain. Residues 1006–1012 (WMKITGG) traverse the membrane as a beta stranded segment. Residues 1013-1029 (ISSGKLNDGQNKTTTNQ) lie on the Extracellular side of the membrane. Residues 1030–1040 (FINQLGGDIYK) form a beta stranded membrane-spanning segment. The Periplasmic segment spans residues 1041–1047 (FHAEQLG). The chain crosses the membrane as a beta stranded span at residues 1048–1058 (DFTLGIMGGYA). Topologically, residues 1059-1079 (NAKGKTINYTSNKAARNTLDG) are extracellular. The beta stranded transmembrane segment at 1080–1087 (YSVGVYGT) threads the bilayer. Topologically, residues 1088–1097 (WYQNGENATG) are periplasmic. The beta stranded transmembrane segment at 1098–1108 (LFAETWMQYNW) threads the bilayer. At 1109–1126 (FNASVKGDGLEEEKYNLN) the chain is on the extracellular side. The beta stranded transmembrane segment at 1127–1138 (GLTASAGGGYNL) threads the bilayer. Residues 1139–1152 (NVHTWTSPEGITGE) are Periplasmic-facing. A beta stranded membrane pass occupies residues 1153-1164 (FWLQPHLQAVWM). Over 1165 to 1186 (GVTPDTHQEDNGTVVQGAGKNN) the chain is Extracellular. The chain crosses the membrane as a beta stranded span at residues 1187–1198 (IQTKAGIRASWK). Residues 1199–1210 (VKSTLDKDTGRR) are Periplasmic-facing. Residues 1211-1221 (FRPYIEANWIH) form a beta stranded membrane-spanning segment. Residues 1222–1242 (NTHEFGVKMSDDSQLLSGSRN) are Extracellular-facing. The chain crosses the membrane as a beta stranded span at residues 1243-1253 (QGEIKTGIEGV). Topologically, residues 1254–1259 (ITQNLS) are periplasmic. The beta stranded transmembrane segment at 1260–1267 (VNGGVAYQ) threads the bilayer. Residues 1268-1275 (AGGHGSNA) are Extracellular-facing. The chain crosses the membrane as a beta stranded span at residues 1276–1284 (ISGALGIKY). Residues 1285–1286 (SF) are Periplasmic-facing.

In terms of assembly, intercellular AIDA-AIDA interaction is responsible for bacterial autoaggregation. AIDA can also interact with antigen 43 (Ag43), and the resultant intercellular AIDA-Ag43 interaction causes cell aggregation. In terms of processing, glycosylated on serine residues by AHH and AAH2 in the cytoplasm. Glycosylated with an average of 19 heptose residues. Glycosylated with either ADP-L, D-heptose or ADP-D, D-heptose. Glycosylation is required for protein folding/stabilization and resistance to protease-mediated degradation. Glycosylation is required for bacteria adhesion to mammalian cells. Glycosylation is dispensable for cell outer membrane localization. Glycosylation is dispensable for AIDA-mediated cell-cell aggregation and induction of biofilm formation. Glycosylation is dispensable for interaction with Ag43.

The protein localises to the periplasm. Its subcellular location is the secreted. It is found in the cell surface. The protein resides in the cell outer membrane. In terms of biological role, potent bacterial adhesin that mediates bacterial attachment to a broad variety of human and other mammalian cells. Has additional virulence properties, as it is capable of mediating bacterial autoaggregation via intercellular self-recognition and it is a highly efficient initiator of biofilm formation. This Escherichia coli protein is Autotransporter adhesin AIDA-I (aidA).